The following is a 149-amino-acid chain: Deoxyuridine 5'-triphosphate nucleotidohydrolase (149 aa).

Substrate is bound by residues 68–70 (RSG), asparagine 81, 85–87 (LID), and methionine 95.

This sequence belongs to the dUTPase family. Mg(2+) serves as cofactor.

It catalyses the reaction dUTP + H2O = dUMP + diphosphate + H(+). It functions in the pathway pyrimidine metabolism; dUMP biosynthesis; dUMP from dCTP (dUTP route): step 2/2. This enzyme is involved in nucleotide metabolism: it produces dUMP, the immediate precursor of thymidine nucleotides and it decreases the intracellular concentration of dUTP so that uracil cannot be incorporated into DNA. The polypeptide is Deoxyuridine 5'-triphosphate nucleotidohydrolase (Polynucleobacter asymbioticus (strain DSM 18221 / CIP 109841 / QLW-P1DMWA-1) (Polynucleobacter necessarius subsp. asymbioticus)).